The chain runs to 168 residues: MEVYVLRLGHRPERDKRISTHVALTARAFGAKGIYFDTEDKSVFESVRDVVERWGGDFFIKAVSWKKLLREFDGLKVHLTMYGIPLPQKLEEIKRADKVLVVVGAEKVPPEVYELCDLNISIGTQPHSEVAALAVFLDRVLGKVFDISFDDAKIKVIPSERGKRVVSE.

Residues Leu-79 and 104-108 (GAEKV) contribute to the S-adenosyl-L-methionine site.

Belongs to the aTrm56 family. In terms of assembly, homodimer.

It is found in the cytoplasm. The enzyme catalyses cytidine(56) in tRNA + S-adenosyl-L-methionine = 2'-O-methylcytidine(56) in tRNA + S-adenosyl-L-homocysteine + H(+). Specifically catalyzes the AdoMet-dependent 2'-O-ribose methylation of cytidine at position 56 in tRNAs. This chain is tRNA (cytidine(56)-2'-O)-methyltransferase, found in Archaeoglobus fulgidus (strain ATCC 49558 / DSM 4304 / JCM 9628 / NBRC 100126 / VC-16).